The following is a 368-amino-acid chain: tRNA 2-selenouridine synthase (368 aa).

One can recognise a Rhodanese domain in the interval 12 to 136; it reads FLGDAPLLDT…MRGFLLETIE (125 aa). The active-site S-selanylcysteine intermediate is the cysteine 95.

Belongs to the SelU family. As to quaternary structure, monomer.

The catalysed reaction is 5-methylaminomethyl-2-thiouridine(34) in tRNA + selenophosphate + (2E)-geranyl diphosphate + H2O + H(+) = 5-methylaminomethyl-2-selenouridine(34) in tRNA + (2E)-thiogeraniol + phosphate + diphosphate. It catalyses the reaction 5-methylaminomethyl-2-thiouridine(34) in tRNA + (2E)-geranyl diphosphate = 5-methylaminomethyl-S-(2E)-geranyl-thiouridine(34) in tRNA + diphosphate. It carries out the reaction 5-methylaminomethyl-S-(2E)-geranyl-thiouridine(34) in tRNA + selenophosphate + H(+) = 5-methylaminomethyl-2-(Se-phospho)selenouridine(34) in tRNA + (2E)-thiogeraniol. The enzyme catalyses 5-methylaminomethyl-2-(Se-phospho)selenouridine(34) in tRNA + H2O = 5-methylaminomethyl-2-selenouridine(34) in tRNA + phosphate. Its function is as follows. Involved in the post-transcriptional modification of the uridine at the wobble position (U34) of tRNA(Lys), tRNA(Glu) and tRNA(Gln). Catalyzes the conversion of 2-thiouridine (S2U-RNA) to 2-selenouridine (Se2U-RNA). Acts in a two-step process involving geranylation of 2-thiouridine (S2U) to S-geranyl-2-thiouridine (geS2U) and subsequent selenation of the latter derivative to 2-selenouridine (Se2U) in the tRNA chain. The protein is tRNA 2-selenouridine synthase of Bordetella bronchiseptica (strain ATCC BAA-588 / NCTC 13252 / RB50) (Alcaligenes bronchisepticus).